A 304-amino-acid chain; its full sequence is Cell surface-binding protein OPG105 (304 aa).

It belongs to the alpha-carbonic anhydrase family. Homodimer; disulfide-linked. Apparently non-glycosylated.

It localises to the virion membrane. Binds to chondroitin sulfate on the cell surface to provide virion attachment to target cell. This Monkeypox virus protein is Cell surface-binding protein OPG105 (OPG105).